Reading from the N-terminus, the 470-residue chain is UDP-N-acetylmuramoylalanine--D-glutamate ligase (470 aa).

121–127 is an ATP binding site; it reads GTNGKST.

The protein belongs to the MurCDEF family.

The protein localises to the cytoplasm. It carries out the reaction UDP-N-acetyl-alpha-D-muramoyl-L-alanine + D-glutamate + ATP = UDP-N-acetyl-alpha-D-muramoyl-L-alanyl-D-glutamate + ADP + phosphate + H(+). The protein operates within cell wall biogenesis; peptidoglycan biosynthesis. Its function is as follows. Cell wall formation. Catalyzes the addition of glutamate to the nucleotide precursor UDP-N-acetylmuramoyl-L-alanine (UMA). The sequence is that of UDP-N-acetylmuramoylalanine--D-glutamate ligase from Rhizobium johnstonii (strain DSM 114642 / LMG 32736 / 3841) (Rhizobium leguminosarum bv. viciae).